The chain runs to 172 residues: Putative phosphoesterase BC_1225 (172 aa).

The active-site Proton donor is the His34. 2 short sequence motifs (HXTX) span residues 34–37 (HITL) and 115–118 (HLTI). The Proton acceptor role is filled by His115.

The protein belongs to the 2H phosphoesterase superfamily. YjcG family.

This Bacillus cereus (strain ATCC 14579 / DSM 31 / CCUG 7414 / JCM 2152 / NBRC 15305 / NCIMB 9373 / NCTC 2599 / NRRL B-3711) protein is Putative phosphoesterase BC_1225.